The chain runs to 185 residues: MMYLTYYFIEITIFLAILCTIFIISAKNPMVSILYMIALFVIAAMYLYLIGLGIFSLLYIMIYIGAIAVLFLFIITLLDINSTELSVKSNIRDLPLVLISLIVLTISGLMIYSNDSILINKLLEAFGNDYNTIITQDWFNIENTTLLTTIGNVLLTNNAFILLVLAIVLLLGIIGPISITMKHKE.

The next 5 membrane-spanning stretches (helical) occupy residues 4–24 (LTYY…IFII), 33–53 (ILYM…IGLG), 54–74 (IFSL…FLFI), 94–114 (LPLV…IYSN), and 159–179 (AFIL…PISI).

The protein belongs to the complex I subunit 6 family. In terms of assembly, complex I is composed of 37 different subunits.

The protein resides in the mitochondrion membrane. The catalysed reaction is a ubiquinone + NADH + 5 H(+)(in) = a ubiquinol + NAD(+) + 4 H(+)(out). In terms of biological role, core subunit of the mitochondrial membrane respiratory chain NADH dehydrogenase (Complex I) that is believed to belong to the minimal assembly required for catalysis. Complex I functions in the transfer of electrons from NADH to the respiratory chain. The immediate electron acceptor for the enzyme is believed to be ubiquinone. This Yarrowia lipolytica (strain CLIB 122 / E 150) (Yeast) protein is NADH-ubiquinone oxidoreductase chain 6 (ND6).